The primary structure comprises 485 residues: Cysteine--tRNA ligase (485 aa).

Zn(2+) is bound at residue Cys27. The 'HIGH' region motif lies at 29 to 39 (ITAYDLCHIGH). Residues Cys208, His233, and Glu237 each coordinate Zn(2+). A 'KMSKS' region motif is present at residues 265 to 269 (KMSKS). Residue Lys268 participates in ATP binding.

This sequence belongs to the class-I aminoacyl-tRNA synthetase family. Monomer. The cofactor is Zn(2+).

It localises to the cytoplasm. It catalyses the reaction tRNA(Cys) + L-cysteine + ATP = L-cysteinyl-tRNA(Cys) + AMP + diphosphate. In Nitratidesulfovibrio vulgaris (strain DP4) (Desulfovibrio vulgaris), this protein is Cysteine--tRNA ligase.